Here is a 510-residue protein sequence, read N- to C-terminus: uncharacterized protein (510 aa).

To B.subtilis SpoVR.

This is an uncharacterized protein from Escherichia coli (strain K12).